The following is a 107-amino-acid chain: Anti-adapter protein IraM (107 aa).

It belongs to the IraM/RssC family.

The protein resides in the cytoplasm. In terms of biological role, inhibits RpoS proteolysis by regulating RssB activity, thereby increasing the stability of the sigma stress factor RpoS during magnesium starvation. This Escherichia coli O17:K52:H18 (strain UMN026 / ExPEC) protein is Anti-adapter protein IraM.